Consider the following 314-residue polypeptide: Nodulation protein D 1 (314 aa).

Residues 6 to 63 form the HTH lysR-type domain; sequence LDLNLLVALDALMTERNLTAAARSINLSQPAMSAAVGRLRTYFNDDLFTMVGRELVPT. The segment at residues 23-42 is a DNA-binding region (H-T-H motif); sequence LTAAARSINLSQPAMSAAVG.

It belongs to the LysR transcriptional regulatory family.

NodD regulates the expression of the nodABCFE genes which encode other nodulation proteins. NodD is also a negative regulator of its own expression. Binds flavonoids as inducers. This Rhizobium leguminosarum bv. phaseoli protein is Nodulation protein D 1 (nodD1).